Consider the following 108-residue polypeptide: Integration host factor subunit alpha (108 aa).

The protein belongs to the bacterial histone-like protein family. In terms of assembly, heterodimer of an alpha and a beta chain.

Its function is as follows. This protein is one of the two subunits of integration host factor, a specific DNA-binding protein that functions in genetic recombination as well as in transcriptional and translational control. The polypeptide is Integration host factor subunit alpha (Methylorubrum extorquens (strain CM4 / NCIMB 13688) (Methylobacterium extorquens)).